Reading from the N-terminus, the 94-residue chain is Pyrimidine/purine nucleoside phosphorylase (94 aa).

It belongs to the nucleoside phosphorylase PpnP family.

The catalysed reaction is a purine D-ribonucleoside + phosphate = a purine nucleobase + alpha-D-ribose 1-phosphate. It catalyses the reaction adenosine + phosphate = alpha-D-ribose 1-phosphate + adenine. The enzyme catalyses cytidine + phosphate = cytosine + alpha-D-ribose 1-phosphate. It carries out the reaction guanosine + phosphate = alpha-D-ribose 1-phosphate + guanine. The catalysed reaction is inosine + phosphate = alpha-D-ribose 1-phosphate + hypoxanthine. It catalyses the reaction thymidine + phosphate = 2-deoxy-alpha-D-ribose 1-phosphate + thymine. The enzyme catalyses uridine + phosphate = alpha-D-ribose 1-phosphate + uracil. It carries out the reaction xanthosine + phosphate = alpha-D-ribose 1-phosphate + xanthine. Functionally, catalyzes the phosphorolysis of diverse nucleosides, yielding D-ribose 1-phosphate and the respective free bases. Can use uridine, adenosine, guanosine, cytidine, thymidine, inosine and xanthosine as substrates. Also catalyzes the reverse reactions. This is Pyrimidine/purine nucleoside phosphorylase from Cronobacter sakazakii (strain ATCC BAA-894) (Enterobacter sakazakii).